Here is a 159-residue protein sequence, read N- to C-terminus: Protein B1 (159 aa).

Residues 1–15 (MQKNMKTKKTKKRGR) are compositionally biased toward basic residues. 2 disordered regions span residues 1-100 (MQKN…RTRE) and 133-159 (PGHG…DPPR). Residues 16–31 (KEGNTPETERRMEPAR) show a composition bias toward basic and acidic residues. The segment covering 85 to 96 (RGRHIHTRGART) has biased composition (basic residues).

This Human herpesvirus 6B (strain Z29) (HHV-6 variant B) protein is Protein B1 (B1).